The following is a 399-amino-acid chain: Acetate kinase (399 aa).

Asn-9 is a Mg(2+) binding site. Lys-16 contacts ATP. Substrate is bound at residue Arg-90. Residue Asp-147 is the Proton donor/acceptor of the active site. ATP is bound by residues 207 to 211, 282 to 284, and 330 to 334; these read HIGNG, DLR, and GVGEN. Glu-384 lines the Mg(2+) pocket.

It belongs to the acetokinase family. Homodimer. Requires Mg(2+) as cofactor. Mn(2+) serves as cofactor.

It is found in the cytoplasm. The enzyme catalyses acetate + ATP = acetyl phosphate + ADP. Its pathway is metabolic intermediate biosynthesis; acetyl-CoA biosynthesis; acetyl-CoA from acetate: step 1/2. In terms of biological role, catalyzes the formation of acetyl phosphate from acetate and ATP. Can also catalyze the reverse reaction. In Staphylococcus saprophyticus subsp. saprophyticus (strain ATCC 15305 / DSM 20229 / NCIMB 8711 / NCTC 7292 / S-41), this protein is Acetate kinase.